A 175-amino-acid polypeptide reads, in one-letter code: MERLPYEIVSTIFRKAILHYVLIRGTTYPQSLAENLNISKGLASSFLRLCSALNIMKRERAGHKVLYSFTSKGLAILKRLAPEIFDLSFSSVFEQLPKKKIATKYYPVDKIGFEISWKEDKLGGIVFSFFDSNGEHLGDVFRSNKGYWWCVICQSDTCKHIDYLKRLYKTLKNQD.

The first 33 residues, 1–33 (MERLPYEIVSTIFRKAILHYVLIRGTTYPQSLA), serve as a signal peptide directing secretion.

This is an uncharacterized protein from Methanocaldococcus jannaschii (strain ATCC 43067 / DSM 2661 / JAL-1 / JCM 10045 / NBRC 100440) (Methanococcus jannaschii).